Here is a 323-residue protein sequence, read N- to C-terminus: tRNA U34 carboxymethyltransferase (323 aa).

Carboxy-S-adenosyl-L-methionine is bound by residues K91, W105, K110, G130, 181–182 (IE), M196, Y200, and R315.

Belongs to the class I-like SAM-binding methyltransferase superfamily. CmoB family. As to quaternary structure, homotetramer.

It catalyses the reaction carboxy-S-adenosyl-L-methionine + 5-hydroxyuridine(34) in tRNA = 5-carboxymethoxyuridine(34) in tRNA + S-adenosyl-L-homocysteine + H(+). Functionally, catalyzes carboxymethyl transfer from carboxy-S-adenosyl-L-methionine (Cx-SAM) to 5-hydroxyuridine (ho5U) to form 5-carboxymethoxyuridine (cmo5U) at position 34 in tRNAs. The sequence is that of tRNA U34 carboxymethyltransferase from Yersinia pseudotuberculosis serotype O:1b (strain IP 31758).